We begin with the raw amino-acid sequence, 130 residues long: Glycine cleavage system H protein (130 aa).

A Lipoyl-binding domain is found at 24-106 (TVTIGITDHA…YDEGWFFKVK (83 aa)). The residue at position 65 (lysine 65) is an N6-lipoyllysine.

The protein belongs to the GcvH family. As to quaternary structure, the glycine cleavage system is composed of four proteins: P, T, L and H. It depends on (R)-lipoate as a cofactor.

Functionally, the glycine cleavage system catalyzes the degradation of glycine. The H protein shuttles the methylamine group of glycine from the P protein to the T protein. This is Glycine cleavage system H protein from Teredinibacter turnerae (strain ATCC 39867 / T7901).